We begin with the raw amino-acid sequence, 361 residues long: Neuronal-specific septin-3 (361 aa).

The interval 1 to 46 is disordered; the sequence is MSEIVPPEVRPKPAVPAKPSHVAPPSSAPFVPSPQGTGGEGQGSGR. Positions 15 to 34 are enriched in low complexity; sequence VPAKPSHVAPPSSAPFVPSP. The span at 36–46 shows a compositional bias: gly residues; that stretch reads GTGGEGQGSGR. In terms of domain architecture, Septin-type G spans 70 to 342; that stretch reads AGFDFNIMVV…ETYRAKRLND (273 aa). The interval 80–87 is G1 motif; it reads GQSGLGKS. GTP-binding positions include 80 to 87 and Thr-114; that span reads GQSGLGKS. The G3 motif stretch occupies residues 137–140; sequence DTPG. The segment at 219-222 is G4 motif; it reads AKSD. Residues 220–228, Gly-276, and Arg-291 each bind GTP; that span reads KSDTLTPEE. Positions 341 to 361 are disordered; sequence NDNGGLHPISSSGHDTQESNL. Polar residues predominate over residues 349-361; the sequence is ISSSGHDTQESNL.

Belongs to the TRAFAC class TrmE-Era-EngA-EngB-Septin-like GTPase superfamily. Septin GTPase family.

The protein localises to the cytoplasm. In terms of biological role, may be involved in cytokinesis. The protein is Neuronal-specific septin-3 of Danio rerio (Zebrafish).